The sequence spans 288 residues: 3'-5' exonuclease (288 aa).

Positions 30–67 are disordered; the sequence is RSSSSSSSAAPTVQATTSVHGHEEDPNQIPNNIRRQLP. Polar residues-rich tracts occupy residues 38-48 and 57-67; these read AAPTVQATTSV and QIPNNIRRQLP. The 3'-5' exonuclease domain maps to 129–279; sequence FVGLDIEWRP…ASWHLYKVLK (151 aa).

As to quaternary structure, interacts with KU70 and KU80. Interacts with RECQL2. Requires Mg(2+) as cofactor. It depends on Mn(2+) as a cofactor. In terms of tissue distribution, expressed ubiquitously.

Its subcellular location is the nucleus. With respect to regulation, activated upon interaction with the KU heterodimer. Not stimulated by ATP. Exonuclease that digests recessed strands of DNA duplexes in the 3' to 5' direction but hardly single-stranded DNA or blunt-ended duplexes. Also able to digest 3'-protruding strands and 3'-recessed strand termini of duplexes containing mismatched bases. In Arabidopsis thaliana (Mouse-ear cress), this protein is 3'-5' exonuclease (WEX).